Here is a 364-residue protein sequence, read N- to C-terminus: Bifunctional protein Rv2228c (364 aa).

Residues 1-139 (MKVVIEADGG…MDAAAQSAAA (139 aa)) form the RNase H type-1 domain. Asp8, Glu49, Asp73, and Asp123 together coordinate Mg(2+). His172 functions as the Tele-phosphohistidine intermediate in the catalytic mechanism. The active-site Proton donor/acceptor; for phosphatase activity is Glu246.

The protein in the N-terminal section; belongs to the RNase H family. In the C-terminal section; belongs to the histidine phosphatase superfamily. In terms of assembly, the N-terminal domain alone is monomeric in solution but associates in the crystal to form a dimer. The cofactor is Mg(2+).

It carries out the reaction Endonucleolytic cleavage to 5'-phosphomonoester.. The catalysed reaction is adenosylcob(III)alamin 5'-phosphate + H2O = adenosylcob(III)alamin + phosphate. It catalyses the reaction alpha-ribazole 5'-phosphate + H2O = alpha-ribazole + phosphate. The protein operates within nucleoside biosynthesis; alpha-ribazole biosynthesis; alpha-ribazole from 5,6-dimethylbenzimidazole: step 2/2. Its function is as follows. Endonuclease that displays both RNase H activity with a hybrid RNA/DNA substrate as well as double-stranded RNase activity. As the only authenticated RNase HI in M.tuberculosis, probably plays an important role in the physiology of this organism, being likely involved in bacterial replication. Catalyzes the hydrolysis of the phospho group from alpha-ribazole 5'-phosphate to form alpha-ribazole. May also catalyze the conversion of adenosylcobalamin 5'-phosphate to adenosylcobalamin (vitamin B12). Has a possible role in B12 recycling, but the primary role of the C-terminal domain of this phosphatase enzyme could be phosphate generation to help bacterial survival within the macrophage, which is a phosphate-deprived environment. This chain is Bifunctional protein Rv2228c, found in Mycobacterium tuberculosis (strain ATCC 25618 / H37Rv).